The primary structure comprises 505 residues: Flagellin (505 aa).

The protein belongs to the bacterial flagellin family.

It is found in the secreted. The protein localises to the bacterial flagellum. Functionally, flagellin is the subunit protein which polymerizes to form the filaments of bacterial flagella. This is Flagellin (fliC) from Salmonella derby.